The chain runs to 376 residues: F-box/kelch-repeat protein At1g67480 (376 aa).

Residues 37–85 (DPLIPGLPDDVAKQCLALVPRARFPSMGSVCKKWRFVVQSKEFITVRRL) form the F-box domain. Kelch repeat units follow at residues 139 to 189 (KLLV…EVNG), 190 to 237 (HVYV…AFNG), 239 to 289 (LYVM…LFCI), and 291 to 335 (WKNH…LLFS).

This is F-box/kelch-repeat protein At1g67480 from Arabidopsis thaliana (Mouse-ear cress).